A 573-amino-acid polypeptide reads, in one-letter code: E3 ubiquitin-protein ligase TRIM23 (573 aa).

Residues 31–76 form an RING-type; degenerate zinc finger; the sequence is CGVCEDVFSLQGDKVPRLLLCGHTVCHDCLTRLPLHGRAIRCPFDR. A B box-type; degenerate zinc finger spans residues 122 to 168; it reads ESIIRCDEDEAHVASVYCTVCATHLCSECSQVTHSTKTLAKHRRVPL. Residues 351–378 are a coiled coil; that stretch reads RVVLAKQEITRLLETLQKQQQQFTEVAD. Residues 390-573 are ARF-like; it reads FTKDNRVYHG…LVAAGVLDVA (184 aa). Residues 411 to 418, 454 to 458, and 513 to 516 each bind GTP; these read LDGAGKTT, VGGKH, and KQDV.

The protein in the C-terminal section; belongs to the small GTPase superfamily. Arf family. In terms of assembly, homodimer. Interacts with PSCD1. Interacts with UBE2D2. Interacts with TBK1 (via N-terminal kinase domain) and p62/SQSTM1.

The protein localises to the cytoplasm. It localises to the endomembrane system. It is found in the golgi apparatus membrane. The protein resides in the lysosome membrane. It carries out the reaction S-ubiquitinyl-[E2 ubiquitin-conjugating enzyme]-L-cysteine + [acceptor protein]-L-lysine = [E2 ubiquitin-conjugating enzyme]-L-cysteine + N(6)-ubiquitinyl-[acceptor protein]-L-lysine.. The protein operates within protein modification; protein ubiquitination. Functionally, acts as an E3 ubiquitin-protein ligase. Plays an essential role in autophagy activation during viral infection. Mechanistically, activates TANK-binding kinase 1/TBK1 by facilitating its dimerization and ability to phosphorylate the selective autophagy receptor SQSTM1. In order to achieve this function, TRIM23 mediates 'Lys-27'-linked auto-ubiquitination of its ADP-ribosylation factor (ARF) domain to induce its GTPase activity and its recruitment to autophagosomes. This chain is E3 ubiquitin-protein ligase TRIM23 (Trim23), found in Rattus norvegicus (Rat).